Here is a 320-residue protein sequence, read N- to C-terminus: Glutathione synthetase (320 aa).

Positions 133–317 (KMYTLQFAAV…LGEKVICWLE (185 aa)) constitute an ATP-grasp domain. ATP is bound at residue 159–215 (LEEHGAAVLKPLGGKAGEGILFLDPGDRNFNSLVEISTQHGKEPVMVQRFLPEAKEG). Positions 288 and 290 each coordinate Mg(2+).

This sequence belongs to the prokaryotic GSH synthase family. Requires Mg(2+) as cofactor. It depends on Mn(2+) as a cofactor.

The enzyme catalyses gamma-L-glutamyl-L-cysteine + glycine + ATP = glutathione + ADP + phosphate + H(+). The protein operates within sulfur metabolism; glutathione biosynthesis; glutathione from L-cysteine and L-glutamate: step 2/2. The sequence is that of Glutathione synthetase from Synechocystis sp. (strain ATCC 27184 / PCC 6803 / Kazusa).